Reading from the N-terminus, the 141-residue chain is Nucleoside diphosphate kinase (141 aa).

Residues lysine 11, phenylalanine 59, arginine 87, threonine 93, arginine 104, and asparagine 114 each contribute to the ATP site. The active-site Pros-phosphohistidine intermediate is histidine 117.

The protein belongs to the NDK family. Homotetramer. It depends on Mg(2+) as a cofactor.

The protein resides in the cytoplasm. It carries out the reaction a 2'-deoxyribonucleoside 5'-diphosphate + ATP = a 2'-deoxyribonucleoside 5'-triphosphate + ADP. It catalyses the reaction a ribonucleoside 5'-diphosphate + ATP = a ribonucleoside 5'-triphosphate + ADP. In terms of biological role, major role in the synthesis of nucleoside triphosphates other than ATP. The ATP gamma phosphate is transferred to the NDP beta phosphate via a ping-pong mechanism, using a phosphorylated active-site intermediate. This Bordetella avium (strain 197N) protein is Nucleoside diphosphate kinase.